An 800-amino-acid chain; its full sequence is Phenylalanine--tRNA ligase beta subunit (800 aa).

Residues 39–154 (TKDIKNLVVG…ESQVPGTDAL (116 aa)) enclose the tRNA-binding domain. Residues 408–483 (AFITPIDITA…RIYGYDDIPS (76 aa)) form the B5 domain. Residues D461, D467, E470, and E471 each contribute to the Mg(2+) site. The FDX-ACB domain occupies 708-800 (PRFPGMSRDI…ALIEQGAVIR (93 aa)).

It belongs to the phenylalanyl-tRNA synthetase beta subunit family. Type 1 subfamily. In terms of assembly, tetramer of two alpha and two beta subunits. Mg(2+) is required as a cofactor.

It localises to the cytoplasm. The enzyme catalyses tRNA(Phe) + L-phenylalanine + ATP = L-phenylalanyl-tRNA(Phe) + AMP + diphosphate + H(+). In Staphylococcus aureus (strain Mu50 / ATCC 700699), this protein is Phenylalanine--tRNA ligase beta subunit.